The primary structure comprises 612 residues: Protein tipD (612 aa).

Positions 95 to 128 (RNEKKTQQQPPSGSSKMDSSSSSSSSNRVSGMGS) are disordered. Residues 106–128 (SGSSKMDSSSSSSSSNRVSGMGS) show a composition bias toward low complexity. WD repeat units follow at residues 322–361 (GHNS…QKST), 364–403 (GASQ…SRHT), 406–444 (GHIG…CTRT), 447–486 (CFSS…PTQV), 490–530 (IHEG…TIRT), 535–576 (EYRN…TVKV), and 582–611 (NNGS…IIQW).

This sequence belongs to the WD repeat tipD family.

Its function is as follows. Not known; disruption of the gene for tipD results in morphological defects. This chain is Protein tipD (tipD), found in Dictyostelium discoideum (Social amoeba).